The sequence spans 416 residues: Mitochondrial inner membrane i-AAA protease complex subunit MGR1 (416 aa).

Residues 1-28 form a disordered region; the sequence is MAVFTPPSGNSNSTDHTHTQDDHDKDDN. The Mitochondrial intermembrane segment spans residues 1–56; sequence MAVFTPPSGNSNSTDHTHTQDDHDKDDNDIKKFYIRPSLGLKLWGPLVPAPDNLPG. Basic and acidic residues predominate over residues 15 to 28; the sequence is DHTHTQDDHDKDDN. The chain crosses the membrane as a helical span at residues 57–73; sequence LYTLITIQSAVGFFALW. The Mitochondrial matrix portion of the chain corresponds to 74 to 151; sequence RLRRLYKLPP…RQSRFVSVRK (78 aa). Residues 152–169 traverse the membrane as a helical segment; that stretch reads LLWGLFGSLLLSQSLLEL. Over 170-416 the chain is Mitochondrial intermembrane; sequence TRLNFLKYDP…PKALTNEKTH (247 aa). The span at 390-400 shows a compositional bias: polar residues; the sequence is SHTKTPTSTDQ. Residues 390–416 form a disordered region; sequence SHTKTPTSTDQPLPGPTPKALTNEKTH.

It belongs to the MGR1 family. Component of the mitochondrial inner membrane i-AAA protease complex composed of at least MRG1 and YME1. Interacts directly with YME1.

It is found in the mitochondrion inner membrane. Component of the mitochondrial inner membrane i-AAA protease complex required for mitochondrial inner membrane protein turnover. Required for growth of cells lacking the mitochondrial genome. The chain is Mitochondrial inner membrane i-AAA protease complex subunit MGR1 (MGR1) from Saccharomyces cerevisiae (strain YJM789) (Baker's yeast).